The chain runs to 416 residues: Gamma-glutamyl phosphate reductase (416 aa).

The protein belongs to the gamma-glutamyl phosphate reductase family.

The protein resides in the cytoplasm. The enzyme catalyses L-glutamate 5-semialdehyde + phosphate + NADP(+) = L-glutamyl 5-phosphate + NADPH + H(+). It functions in the pathway amino-acid biosynthesis; L-proline biosynthesis; L-glutamate 5-semialdehyde from L-glutamate: step 2/2. Functionally, catalyzes the NADPH-dependent reduction of L-glutamate 5-phosphate into L-glutamate 5-semialdehyde and phosphate. The product spontaneously undergoes cyclization to form 1-pyrroline-5-carboxylate. In Streptococcus pyogenes serotype M6 (strain ATCC BAA-946 / MGAS10394), this protein is Gamma-glutamyl phosphate reductase.